Reading from the N-terminus, the 317-residue chain is DNA-directed RNA polymerase subunit alpha (317 aa).

The tract at residues 1–234 (MKQFVRPEFI…AHLEFFIDLN (234 aa)) is alpha N-terminal domain (alpha-NTD). Positions 250–317 (DKELDRTVEE…ASLGLAFRQS (68 aa)) are alpha C-terminal domain (alpha-CTD).

Belongs to the RNA polymerase alpha chain family. In terms of assembly, homodimer. The RNAP catalytic core consists of 2 alpha, 1 beta, 1 beta' and 1 omega subunit. When a sigma factor is associated with the core the holoenzyme is formed, which can initiate transcription.

The catalysed reaction is RNA(n) + a ribonucleoside 5'-triphosphate = RNA(n+1) + diphosphate. Its function is as follows. DNA-dependent RNA polymerase catalyzes the transcription of DNA into RNA using the four ribonucleoside triphosphates as substrates. The chain is DNA-directed RNA polymerase subunit alpha from Mycoplasma mycoides subsp. mycoides SC (strain CCUG 32753 / NCTC 10114 / PG1).